The chain runs to 447 residues: MSQDVREVNFDGLVGPTHNYAGLAHGNVASMRHGGLTANPREAALQGLAKMKSLMEAGFAQGVLPPQQRPDLGALRDLGFTGDDAGVLAQAARQAPQLLRAVCSASSMWTANAATVTPSLDAPDGRVHFTAANLQSSFHRYLEPRTTARVLAAMFHDPAHFAHHPVLPATPTFSDEGAANHTRLCGDHDEPGVHLYVYGRQAFGGEHGPKRYPARQTLEASQAIARQHGLDDTRTVFAQQHPDAIDAGVFHNDVIAVGNGPVLLYHEMAFRDETATLEALRARMSTPLIPVRVPSEAISLEDAVATYLFNSQLLSNPDGSMTLVVPGECQENETVWRTIQDLLLGGNNPISEVLVKDVKQSMRNGGGPACLRLRVALAARERQALTGRVLLDEALHDDLAAWVERHYRDRLAPEDLADPLLVRESLTALDELTQLLGIGAVYPFQLN.

Substrate contacts are provided by residues 21 to 30 (AGLAHGNVAS), Asn-112, and 139 to 140 (HR). Residue Glu-176 is part of the active site. Arg-215 is a substrate binding site. The active site involves His-251. Substrate contacts are provided by Asp-253 and Asn-364. Cys-370 acts as the Nucleophile in catalysis.

This sequence belongs to the succinylarginine dihydrolase family. In terms of assembly, homodimer.

It carries out the reaction N(2)-succinyl-L-arginine + 2 H2O + 2 H(+) = N(2)-succinyl-L-ornithine + 2 NH4(+) + CO2. The protein operates within amino-acid degradation; L-arginine degradation via AST pathway; L-glutamate and succinate from L-arginine: step 2/5. Functionally, catalyzes the hydrolysis of N(2)-succinylarginine into N(2)-succinylornithine, ammonia and CO(2). The sequence is that of N-succinylarginine dihydrolase from Chromohalobacter salexigens (strain ATCC BAA-138 / DSM 3043 / CIP 106854 / NCIMB 13768 / 1H11).